Consider the following 314-residue polypeptide: Olfactory receptor 5B17 (314 aa).

Residues 1–23 are Extracellular-facing; that stretch reads MENNTEVSEFILLGLTNAPELQV. A glycan (N-linked (GlcNAc...) asparagine) is linked at N3. The chain crosses the membrane as a helical span at residues 24–44; that stretch reads PLFIMFTLIYLITLTGNLGMI. Topologically, residues 45–52 are cytoplasmic; sequence ILILLDSH. The helical transmembrane segment at 53–73 threads the bilayer; that stretch reads LHTPMYFFLSNLSLAGIGYSS. Residues 74 to 97 lie on the Extracellular side of the membrane; it reads AVTPKVLTGLLIEDKAISYSACAA. C95 and C187 are disulfide-bonded. A helical membrane pass occupies residues 98-118; sequence QMFFCAVFATVENYLLSSMAY. Residues 119–137 lie on the Cytoplasmic side of the membrane; sequence DRYAAVCNPLHYTTTMTTR. The helical transmembrane segment at 138 to 158 threads the bilayer; it reads VCACLAIGCYVIGFLNASIQI. Residues 159–194 lie on the Extracellular side of the membrane; the sequence is GDTFRLSFCMSNVIHHFFCDKPAVITLTCSEKHISE. The helical transmembrane segment at 195 to 215 threads the bilayer; the sequence is LILVLISSFNVFFALLVTLIS. Over 216 to 235 the chain is Cytoplasmic; sequence YLFILITILKRHTGKGYQKP. Residues 236 to 256 traverse the membrane as a helical segment; that stretch reads LSTCGSHLIAIFLFYITVIIM. Residues 257 to 269 lie on the Extracellular side of the membrane; sequence YIRPSSSHSMDTD. A helical membrane pass occupies residues 270–290; the sequence is KIASVFYTMIIPMLSPIVYTL. Over 291–314 the chain is Cytoplasmic; it reads RNKDVKNAFMKVVEKAKYSLDSVF.

The protein belongs to the G-protein coupled receptor 1 family.

The protein localises to the cell membrane. Its function is as follows. Odorant receptor. This chain is Olfactory receptor 5B17 (OR5B17), found in Homo sapiens (Human).